Here is a 184-residue protein sequence, read N- to C-terminus: Transcription termination/antitermination protein NusG (184 aa).

The protein belongs to the NusG family.

Functionally, participates in transcription elongation, termination and antitermination. This Borreliella burgdorferi (strain ATCC 35210 / DSM 4680 / CIP 102532 / B31) (Borrelia burgdorferi) protein is Transcription termination/antitermination protein NusG.